A 211-amino-acid polypeptide reads, in one-letter code: Calaxin (211 aa).

3 EF-hand domains span residues 64-99 (TDDM…FLRG), 100-135 (SLEE…SLLK), and 145-180 (GIKD…ETLL). D77, D79, D81, C83, E88, D113, N115, D117, E124, D158, D160, D162, K164, and D169 together coordinate Ca(2+).

As to quaternary structure, component of the outer dynein arm-docking complex along with ODAD1, ODAD2, ODAD3 and ODAD4. In terms of tissue distribution, strong expression in the respiratory epithelium. Expressed in the sperm.

It localises to the cytoplasm. The protein resides in the cytoskeleton. Its subcellular location is the cilium axoneme. It is found in the cell projection. The protein localises to the cilium. It localises to the flagellum. Component of the outer dynein arm-docking complex (ODA-DC) that mediates outer dynein arms (ODA) binding onto the doublet microtubule. Seems to regulate the assembly of both ODAs and their axonemal docking complex onto ciliary microtubules. Regulates ciliary and flagellar motility and is required for cilia-driven determination of body laterality. The sequence is that of Calaxin from Homo sapiens (Human).